Here is an 892-residue protein sequence, read N- to C-terminus: Leucine--tRNA ligase (892 aa).

A 'HIGH' region motif is present at residues 42-52; the sequence is PYPSGKLHMGH. Residues 640-644 carry the 'KMSKS' region motif; sequence TMSKS. Lys-643 is a binding site for ATP.

It belongs to the class-I aminoacyl-tRNA synthetase family.

It is found in the cytoplasm. It catalyses the reaction tRNA(Leu) + L-leucine + ATP = L-leucyl-tRNA(Leu) + AMP + diphosphate. This is Leucine--tRNA ligase from Albidiferax ferrireducens (strain ATCC BAA-621 / DSM 15236 / T118) (Rhodoferax ferrireducens).